The primary structure comprises 629 residues: Chaperone protein HtpG (629 aa).

Positions 1–336 are a; substrate-binding; that stretch reads MSSTENNGTA…TEDLSLNVSR (336 aa). The interval 337–549 is b; the sequence is EMVQSSPVMA…KDAIDSQLER (213 aa). Positions 550 to 629 are c; the sequence is MMKMMNTPMP…ELIEAATLTR (80 aa).

The protein belongs to the heat shock protein 90 family. As to quaternary structure, homodimer.

Its subcellular location is the cytoplasm. Its function is as follows. Molecular chaperone. Has ATPase activity. This Chlorobium chlorochromatii (strain CaD3) protein is Chaperone protein HtpG.